A 241-amino-acid chain; its full sequence is 15,16-dihydrobiliverdin:ferredoxin oxidoreductase (241 aa).

It belongs to the HY2 family.

The enzyme catalyses 15,16-dihydrobiliverdin + oxidized 2[4Fe-4S]-[ferredoxin] = biliverdin IXalpha + reduced 2[4Fe-4S]-[ferredoxin] + 2 H(+). Catalyzes the two-electron reduction of biliverdin IX-alpha at the C15 methine bridge. The polypeptide is 15,16-dihydrobiliverdin:ferredoxin oxidoreductase (pebA) (Prochlorococcus marinus (strain SARG / CCMP1375 / SS120)).